We begin with the raw amino-acid sequence, 408 residues long: 1-deoxy-D-xylulose 5-phosphate reductoisomerase (408 aa).

Residues threonine 27, glycine 28, serine 29, isoleucine 30, alanine 53, arginine 54, asparagine 55, and asparagine 140 each coordinate NADPH. Lysine 141 provides a ligand contact to 1-deoxy-D-xylulose 5-phosphate. Glutamate 142 serves as a coordination point for NADPH. Residue aspartate 166 coordinates Mn(2+). The 1-deoxy-D-xylulose 5-phosphate site is built by serine 167, glutamate 168, serine 192, and histidine 215. Glutamate 168 lines the Mn(2+) pocket. Glycine 221 provides a ligand contact to NADPH. 4 residues coordinate 1-deoxy-D-xylulose 5-phosphate: serine 228, asparagine 233, lysine 234, and glutamate 237. Glutamate 237 contributes to the Mn(2+) binding site.

Belongs to the DXR family. It depends on Mg(2+) as a cofactor. The cofactor is Mn(2+).

It carries out the reaction 2-C-methyl-D-erythritol 4-phosphate + NADP(+) = 1-deoxy-D-xylulose 5-phosphate + NADPH + H(+). It functions in the pathway isoprenoid biosynthesis; isopentenyl diphosphate biosynthesis via DXP pathway; isopentenyl diphosphate from 1-deoxy-D-xylulose 5-phosphate: step 1/6. Its function is as follows. Catalyzes the NADPH-dependent rearrangement and reduction of 1-deoxy-D-xylulose-5-phosphate (DXP) to 2-C-methyl-D-erythritol 4-phosphate (MEP). The chain is 1-deoxy-D-xylulose 5-phosphate reductoisomerase from Nitratidesulfovibrio vulgaris (strain DP4) (Desulfovibrio vulgaris).